We begin with the raw amino-acid sequence, 314 residues long: MTAASSAGPRPRHLLDFQDWTPERLEAVLDNADTMLQVLDRPVKKVPALQGLTVCTAFFENSTRTRTSFELAARRMSADVVSFAAGNSSVSKGESLRDTIEVLTAYKVDAYVVRHHAAGAAHLVAKYSGKPVINAGDGRRAHPTQALLDAYTIRQEYGSLEGKKVAIIGDIRHSRVARSNAELLPKLGAEVVLCGPATLLPPDLAGQPGVRLTTDPREAVRGAHAVMALRLQQERMNGGYLASLQEYADTYQVNETLMREAESGAIVLHPGPMNRDLEISTEAADGPRSRIIRQVENGQAVRMSVLYHLLVGRA.

Carbamoyl phosphate is bound by residues arginine 64 and threonine 65. L-aspartate is bound at residue lysine 92. Residues arginine 114, histidine 142, and glutamine 145 each contribute to the carbamoyl phosphate site. Positions 175 and 230 each coordinate L-aspartate. The carbamoyl phosphate site is built by glycine 271 and proline 272.

Belongs to the aspartate/ornithine carbamoyltransferase superfamily. ATCase family. As to quaternary structure, heterododecamer (2C3:3R2) of six catalytic PyrB chains organized as two trimers (C3), and six regulatory PyrI chains organized as three dimers (R2).

It carries out the reaction carbamoyl phosphate + L-aspartate = N-carbamoyl-L-aspartate + phosphate + H(+). It functions in the pathway pyrimidine metabolism; UMP biosynthesis via de novo pathway; (S)-dihydroorotate from bicarbonate: step 2/3. In terms of biological role, catalyzes the condensation of carbamoyl phosphate and aspartate to form carbamoyl aspartate and inorganic phosphate, the committed step in the de novo pyrimidine nucleotide biosynthesis pathway. This Deinococcus radiodurans (strain ATCC 13939 / DSM 20539 / JCM 16871 / CCUG 27074 / LMG 4051 / NBRC 15346 / NCIMB 9279 / VKM B-1422 / R1) protein is Aspartate carbamoyltransferase catalytic subunit.